The sequence spans 191 residues: Holliday junction branch migration complex subunit RuvA (191 aa).

Residues 1-64 are domain I; that stretch reads MIGRLTGTLA…EDAQLLYGFL (64 aa). A domain II region spans residues 65 to 138; sequence TATERATFRQ…KGKLGPDLAL (74 aa). Positions 138–142 are flexible linker; the sequence is LPGAV. Residues 143–191 form a domain III region; it reads IRNEAQSDIVQALIALGYNEREAAAAIKPLPADVGVSDGIKLALRALGK.

The protein belongs to the RuvA family. In terms of assembly, homotetramer. Forms an RuvA(8)-RuvB(12)-Holliday junction (HJ) complex. HJ DNA is sandwiched between 2 RuvA tetramers; dsDNA enters through RuvA and exits via RuvB. An RuvB hexamer assembles on each DNA strand where it exits the tetramer. Each RuvB hexamer is contacted by two RuvA subunits (via domain III) on 2 adjacent RuvB subunits; this complex drives branch migration. In the full resolvosome a probable DNA-RuvA(4)-RuvB(12)-RuvC(2) complex forms which resolves the HJ.

The protein resides in the cytoplasm. Functionally, the RuvA-RuvB-RuvC complex processes Holliday junction (HJ) DNA during genetic recombination and DNA repair, while the RuvA-RuvB complex plays an important role in the rescue of blocked DNA replication forks via replication fork reversal (RFR). RuvA specifically binds to HJ cruciform DNA, conferring on it an open structure. The RuvB hexamer acts as an ATP-dependent pump, pulling dsDNA into and through the RuvAB complex. HJ branch migration allows RuvC to scan DNA until it finds its consensus sequence, where it cleaves and resolves the cruciform DNA. This is Holliday junction branch migration complex subunit RuvA from Leptothrix cholodnii (strain ATCC 51168 / LMG 8142 / SP-6) (Leptothrix discophora (strain SP-6)).